Here is a 561-residue protein sequence, read N- to C-terminus: Terpene synthase 3 (561 aa).

4 residues coordinate Mg(2+): Asp-315, Asp-319, Asp-458, and Glu-466. Positions 315 to 319 (DDVYD) match the DDXXD motif motif.

This sequence belongs to the terpene synthase family. Tpsa subfamily. The cofactor is Mg(2+). Requires Mn(2+) as cofactor. In terms of tissue distribution, mostly expressed in stems amd leaves, and, to a lower extent, in roots and fruits.

It catalyses the reaction (2E,6E)-farnesyl diphosphate = germacrene D + diphosphate. The enzyme catalyses (2E,6E)-farnesyl diphosphate = alpha-copaene + diphosphate. Its pathway is secondary metabolite biosynthesis; terpenoid biosynthesis. Sesquiterpene synthase involved in the biosynthesis of volatile compounds that contribute to the characteristic flavors of black pepper. Mediates the conversion of (2E,6E)-farnesyl diphosphate (FPP) into alpha-copaene and germacrene D. The protein is Terpene synthase 3 of Piper nigrum (Black pepper).